Consider the following 225-residue polypeptide: MSLIVKICGLSTPSTLDVALQAGADMVGFVFFPPSPRHLELARAQELGAQVRGRAAKVALTADADDETLCGIIEALRPDLLQLHGKETVPRIREIKRRFGLPVMKAIGVEIAADLADLPRYAAVADRLLFDARPPKHATRPGGLGVPFDWRLLTNLSVDIPFMLSGGLAAGNVDDAVRITRAGGVDVSSGVESAPGVKDAGMVRDFIRAARAAETSLREATSHVP.

It belongs to the TrpF family.

The enzyme catalyses N-(5-phospho-beta-D-ribosyl)anthranilate = 1-(2-carboxyphenylamino)-1-deoxy-D-ribulose 5-phosphate. It participates in amino-acid biosynthesis; L-tryptophan biosynthesis; L-tryptophan from chorismate: step 3/5. The polypeptide is N-(5'-phosphoribosyl)anthranilate isomerase (Nitrobacter winogradskyi (strain ATCC 25391 / DSM 10237 / CIP 104748 / NCIMB 11846 / Nb-255)).